Here is a 759-residue protein sequence, read N- to C-terminus: Multifunctional tryptophan biosynthesis protein (759 aa).

In terms of domain architecture, Glutamine amidotransferase type-1 spans 27-223 (PIVMIDNYDS…LNLTAGTWEE (197 aa)). An L-glutamine-binding site is contributed by 80 to 82 (GPG). The active-site Nucleophile; for GATase activity is the Cys-108. L-glutamine contacts are provided by residues Gln-112 and 158 to 159 (SL). Residues His-197 and Glu-199 each act as for GATase activity in the active site. Residues 257–519 (ILEKIHAQRL…DPAAFARELL (263 aa)) form an indole-3-glycerol phosphate synthase region. Positions 536 to 759 (LVKVCGTRSL…KAFINAVKEL (224 aa)) are N-(5'-phosphoribosyl)anthranilate isomerase.

It catalyses the reaction N-(5-phospho-beta-D-ribosyl)anthranilate = 1-(2-carboxyphenylamino)-1-deoxy-D-ribulose 5-phosphate. The enzyme catalyses 1-(2-carboxyphenylamino)-1-deoxy-D-ribulose 5-phosphate + H(+) = (1S,2R)-1-C-(indol-3-yl)glycerol 3-phosphate + CO2 + H2O. The catalysed reaction is chorismate + L-glutamine = anthranilate + pyruvate + L-glutamate + H(+). It functions in the pathway amino-acid biosynthesis; L-tryptophan biosynthesis; L-tryptophan from chorismate: step 1/5. Its pathway is amino-acid biosynthesis; L-tryptophan biosynthesis; L-tryptophan from chorismate: step 3/5. It participates in amino-acid biosynthesis; L-tryptophan biosynthesis; L-tryptophan from chorismate: step 4/5. Its function is as follows. Trifunctional enzyme bearing the Gln amidotransferase (GATase) domain of anthranilate synthase, indole-glycerolphosphate synthase, and phosphoribosylanthranilate isomerase activities. In Schizosaccharomyces pombe (strain 972 / ATCC 24843) (Fission yeast), this protein is Multifunctional tryptophan biosynthesis protein (trp1).